We begin with the raw amino-acid sequence, 1040 residues long: Multidrug resistance protein MdtB (1040 aa).

12 consecutive transmembrane segments (helical) span residues 16-36 (FIMR…AGII), 347-367 (LMMA…NIPA), 369-389 (IIPG…MVFL), 396-416 (LTLM…IVVI), 440-460 (IGFT…PLLF), 472-492 (FAIT…TLTP), 537-557 (WLTL…WVFI), 863-883 (LGST…VLGI), 888-908 (FIHP…ALLA), 911-931 (IAGS…IGIV), 968-988 (ILMT…STGV), and 998-1018 (IGMV…TPVI).

The protein belongs to the resistance-nodulation-cell division (RND) (TC 2.A.6) family. MdtB subfamily. In terms of assembly, part of a tripartite efflux system composed of MdtA, MdtB and MdtC. MdtB forms a heteromultimer with MdtC.

It is found in the cell inner membrane. In terms of biological role, the MdtABC tripartite complex confers resistance against novobiocin and deoxycholate. This Escherichia coli O45:K1 (strain S88 / ExPEC) protein is Multidrug resistance protein MdtB.